The primary structure comprises 92 residues: Small ribosomal subunit protein bS18 (92 aa).

Residues 1–22 are disordered; sequence MADERAPQRSTSGPRKKRPFQR.

It belongs to the bacterial ribosomal protein bS18 family. In terms of assembly, part of the 30S ribosomal subunit. Forms a tight heterodimer with protein bS6.

Functionally, binds as a heterodimer with protein bS6 to the central domain of the 16S rRNA, where it helps stabilize the platform of the 30S subunit. This is Small ribosomal subunit protein bS18 from Citrifermentans bemidjiense (strain ATCC BAA-1014 / DSM 16622 / JCM 12645 / Bem) (Geobacter bemidjiensis).